The following is a 1082-amino-acid chain: MTHDNRQLLPQETKLVTPNKDTLSSRYLHVLIIDNTLSTIEFVYMVVKAVLTQADTLKAFEQRKNRPTNRILGLSTSVSKRYINIPKFSSSGANNSQGVKTLAAIRKFSLPDKNCFRNFLSFSTTLFKVPASIDIYFLFFTASTVSTMAARALDLEFILSSLKNSTSPESLLAATAKIEILSLAADSVTHNRVIAFINRLPPKKYHFDLIREYTVFYFLNSTTLTSENKLLSAELLHEELSQIRSSSSPGTELENLNNAEVLYVFDRILNSIKMLKNELSSPIGKLRVQPAANDPGTDKTIKYSKIQSIIQKVHSFTRENSLLANCRAVVELIDDLYRKLYSWFLHILTFEDIQFPGDTFLDRLLKMDYCFTYYPSSNRHLIDLFEKTLDNQTSTDIDKFFDTSGNSPELLYQKTFSLKIFSKNLTAQDNGLYIYPLLKTDLSILDFLGTENILFHRGLIYHILHQKTIPQERENDLNKINQFFATVIQQVIETRSSCLPASLSRLLDTIFHFNRIGLNIETCRIYVEILSNHMATPDTQPIINTFTINLIHIVFTAHVFFICMENFSPTFLFYNRKKLILEQQRAILIIERNEYSTLWKQISDHIDCLFNISLSESFFKEYTKGGNEEHKQFLYKNLFEKWGDVFFPFTYSVTTSKNSTAHHITTLELRAICKEVYQSDSPEAYESLLPYSTHPAFKTLFIKIYVIPMVTYITNLTFDKLQSDYRLITLIHACKLLLPSQHLLLHYMVWLYAFSINVDHIDLGTFTVIKSVIFKIADHINVMTHTIYSPETNLLVSILLNAYTDYLQKYVNPWIKQTITANFSLLQTYITFTKQCASILATKCNINLDNLFISMTIGTDKIVTTSFCSFIATCRNLVRQHEEFKKSLKTIETSKTTLTNMLLNIITSVSSSKELLTNEALQKFIDTVQRISQHVNETYQLISVNLEKCKISNDILIESLKKTISIVDVLSSDAILNTSLTSRCLEAATLAVSNNSFTILEIKKDAVAVFKPFITQLFESMKPTTSLYKKLMATQKLTTDRIPFLDIFDDRYNLVRHVERQLNWYAAYAEAAQQDLIAPLTF.

The segment at 604–1082 (DHIDCLFNIS…QQDLIAPLTF (479 aa)) is interaction with large tegument protein.

Belongs to the herpesviridae inner tegument protein family. In terms of assembly, interacts (via C-terminus) with the large tegument protein/LTP (via N-terminus).

The protein localises to the virion tegument. Its subcellular location is the host cytoplasm. It is found in the host nucleus. The protein resides in the host Golgi apparatus. It localises to the host trans-Golgi network. Its function is as follows. Plays an essential role in cytoplasmic secondary envelopment during viral egress. Interacts with the capsid via the large tegument protein/LTP and participates in its transport to the host trans-Golgi network (TGN) where secondary envelopment occurs. Modulates tegumentation and capsid accumulation at the viral assembly complex. The polypeptide is Inner tegument protein (U30) (Homo sapiens (Human)).